The chain runs to 665 residues: DNA ligase (665 aa).

NAD(+)-binding positions include aspartate 34–aspartate 38, serine 83–leucine 84, and glutamate 114. Residue lysine 116 is the N6-AMP-lysine intermediate of the active site. Residues arginine 137, glutamate 171, lysine 287, and lysine 311 each coordinate NAD(+). Cysteine 405, cysteine 408, cysteine 424, and cysteine 429 together coordinate Zn(2+). Residues lysine 587–aspartate 665 enclose the BRCT domain.

The protein belongs to the NAD-dependent DNA ligase family. LigA subfamily. Requires Mg(2+) as cofactor. It depends on Mn(2+) as a cofactor.

The catalysed reaction is NAD(+) + (deoxyribonucleotide)n-3'-hydroxyl + 5'-phospho-(deoxyribonucleotide)m = (deoxyribonucleotide)n+m + AMP + beta-nicotinamide D-nucleotide.. DNA ligase that catalyzes the formation of phosphodiester linkages between 5'-phosphoryl and 3'-hydroxyl groups in double-stranded DNA using NAD as a coenzyme and as the energy source for the reaction. It is essential for DNA replication and repair of damaged DNA. The sequence is that of DNA ligase from Thermosipho africanus (strain TCF52B).